The following is a 482-amino-acid chain: Type II methyltransferase M.AvaI (482 aa).

Belongs to the N(4)/N(6)-methyltransferase family. N(4) subfamily.

It carries out the reaction a 2'-deoxycytidine in DNA + S-adenosyl-L-methionine = an N(4)-methyl-2'-deoxycytidine in DNA + S-adenosyl-L-homocysteine + H(+). Functionally, an alpha subtype methylase that recognizes the double-stranded sequence 5'-CYCGRG-3', methylates C-1 on both strands, and protects the DNA from cleavage by the AvaI endonuclease. The polypeptide is Type II methyltransferase M.AvaI (Anabaena variabilis).